The chain runs to 282 residues: Trans,polycis-polyprenyl diphosphate synthase ((2Z,6E)-farnesyl diphosphate specific) (282 aa).

A disordered region spans residues 1 to 30 (MSPKTVFSTDTHREPIPPQPHPSGARPPQL). The active site involves Asp44. Residue Asp44 coordinates Mg(2+). Residues 45–48 (GNGR), Trp49, Arg57, His61, and 89–91 (STE) contribute to the substrate site. Asn92 (proton acceptor) is an active-site residue. Residues Trp93, Arg95, Arg212, and 218–220 (RLS) each bind substrate. Glu231 contributes to the Mg(2+) binding site. Residues 262 to 282 (GGAEPNPVGPPQSAAGAQGQD) form a disordered region.

It belongs to the UPP synthase family. Homodimer. It depends on Mg(2+) as a cofactor.

The catalysed reaction is (2Z,6E)-farnesyl diphosphate + 10 isopentenyl diphosphate = di-trans,deca-cis-tridecaprenyl diphosphate + 10 diphosphate. It carries out the reaction (2Z,6E)-farnesyl diphosphate + 11 isopentenyl diphosphate = di-trans,undeca-cis-tetradecaprenyl diphosphate + 11 diphosphate. It catalyses the reaction (2Z,6E)-farnesyl diphosphate + 9 isopentenyl diphosphate = di-trans,nona-cis-dodecaprenyl diphosphate + 9 diphosphate. In terms of biological role, catalyzes the synthesis of Z,E-mixed prenyl diphosphates by a condensation of isopentenyl diphosphate to an allylic diphosphate. It shows a large substrate specificity accepting dimethylallyl diphosphate (DMAPP), GPP, E,Efarnesyl diphosphate (FPP), E,E,E-geranylgeranyl diphosphate (GGPP), neryl diphosphate (Z-GPP), and (2Z,6E)-farnesyl diphosphate (Z,E-FPP) as allylic substrates. The enzyme exhibits the highest activity when Z,E-FPP is employed as an allylic substrate. The major product is dodecaprenyl diphosphate (C60) under every allylic substrate conditions, but the enzyme is also able to synthesize even C70 prenyl diphosphate as the maximum chain-length product. This Thermobifida fusca (strain YX) protein is Trans,polycis-polyprenyl diphosphate synthase ((2Z,6E)-farnesyl diphosphate specific).